Consider the following 404-residue polypeptide: 8-amino-7-oxononanoate synthase (404 aa).

Arg-20 lines the substrate pocket. Pyridoxal 5'-phosphate is bound at residue 116–117; that stretch reads GY. Substrate is bound at residue His-141. Ser-187, His-215, and Thr-243 together coordinate pyridoxal 5'-phosphate. Lys-246 is modified (N6-(pyridoxal phosphate)lysine). Residue Thr-366 participates in substrate binding.

Belongs to the class-II pyridoxal-phosphate-dependent aminotransferase family. BioF subfamily. In terms of assembly, homodimer. Pyridoxal 5'-phosphate serves as cofactor.

It carries out the reaction 6-carboxyhexanoyl-[ACP] + L-alanine + H(+) = (8S)-8-amino-7-oxononanoate + holo-[ACP] + CO2. It participates in cofactor biosynthesis; biotin biosynthesis. Its function is as follows. Catalyzes the decarboxylative condensation of pimeloyl-[acyl-carrier protein] and L-alanine to produce 8-amino-7-oxononanoate (AON), [acyl-carrier protein], and carbon dioxide. The sequence is that of 8-amino-7-oxononanoate synthase from Cupriavidus necator (strain ATCC 17699 / DSM 428 / KCTC 22496 / NCIMB 10442 / H16 / Stanier 337) (Ralstonia eutropha).